Reading from the N-terminus, the 441-residue chain is Trigger factor (441 aa).

The 86-residue stretch at 163–248 (GDQVVFDFVG…IKEVKKPVPA (86 aa)) folds into the PPIase FKBP-type domain.

The protein belongs to the FKBP-type PPIase family. Tig subfamily.

The protein localises to the cytoplasm. The enzyme catalyses [protein]-peptidylproline (omega=180) = [protein]-peptidylproline (omega=0). Functionally, involved in protein export. Acts as a chaperone by maintaining the newly synthesized protein in an open conformation. Functions as a peptidyl-prolyl cis-trans isomerase. This chain is Trigger factor, found in Jannaschia sp. (strain CCS1).